We begin with the raw amino-acid sequence, 359 residues long: Peptide chain release factor 1 (359 aa).

An N5-methylglutamine modification is found at Gln235.

Belongs to the prokaryotic/mitochondrial release factor family. Methylated by PrmC. Methylation increases the termination efficiency of RF1.

The protein localises to the cytoplasm. In terms of biological role, peptide chain release factor 1 directs the termination of translation in response to the peptide chain termination codons UAG and UAA. This chain is Peptide chain release factor 1, found in Aromatoleum aromaticum (strain DSM 19018 / LMG 30748 / EbN1) (Azoarcus sp. (strain EbN1)).